We begin with the raw amino-acid sequence, 502 residues long: Protein DETOXIFICATION 49 (502 aa).

12 helical membrane passes run 41–61, 75–95, 123–143, 153–173, 190–210, 216–236, 267–287, 293–313, 338–358, 372–392, 414–434, and 439–459; these read LPLI…MLFL, LALG…SIGM, LLCS…LLFF, AEIF…LHPI, AFFA…SLGL, ALGA…YIVF, VSVC…GLLL, VASM…PSSL, RTGL…ALMV, IVKL…GNCP, LCCF…FSGF, and LWLG…VVLA.

The protein belongs to the multi antimicrobial extrusion (MATE) (TC 2.A.66.1) family.

The protein localises to the membrane. The sequence is that of Protein DETOXIFICATION 49 from Arabidopsis thaliana (Mouse-ear cress).